We begin with the raw amino-acid sequence, 2863 residues long: Lipopolysaccharide-responsive and beige-like anchor protein (2863 aa).

Disordered regions lie at residues 1–35 (MASEDNRVPSPPPTGDDGGGGGREETPTEGGALSL), 969–1005 (VGSQQPDTKDSPVCPHFTTNGNENSSIEKTSSLESAS), and 1018–1039 (EMKAEQENQELPDEGTLEETLT). Ala-2 carries the N-acetylalanine modification. Phosphoserine occurs at positions 10, 979, and 1003. The span at 985–1005 (FTTNGNENSSIEKTSSLESAS) shows a compositional bias: polar residues. Residues 1006 to 1053 (NIELQTTNTSYEEMKAEQENQELPDEGTLEETLTNETRNADDLEVSSD) adopt a coiled-coil conformation. Residues 1024–1034 (ENQELPDEGTL) show a composition bias toward acidic residues. Phosphoserine occurs at positions 1100, 1135, and 1139. Basic and acidic residues predominate over residues 1161-1176 (PVTEKQTDTETQDSKD). The tract at residues 1161-1193 (PVTEKQTDTETQDSKDSGIQTMTASGSSAMSPE) is disordered. Residues 1177–1193 (SGIQTMTASGSSAMSPE) show a composition bias toward polar residues. Phosphoserine is present on residues Ser-1233, Ser-1247, and Ser-1261. A WD 1 repeat occupies 1301–1343 (STVFRIPEFNWSQMHQRLLTDLLFSIETDIQMWRSHSTKTVMD). Phosphoserine is present on residues Ser-1488 and Ser-1498. Residues 1531–1548 (FLALAVVYFISVLMVSKY) traverse the membrane as a helical segment. The span at 1586-1599 (LTTASVEESESTSS) shows a compositional bias: low complexity. 2 disordered regions span residues 1586–1668 (LTTA…KATP) and 1759–1789 (QASDMGGESPGSRSSNAKLPSVPTVDSVSQD). The residue at position 1605 (Ser-1605) is a Phosphoserine. Residues 1650–1664 (KSPETKNDRGNDLDT) show a composition bias toward basic and acidic residues. A phosphoserine mark is found at Ser-1767, Ser-1770, and Ser-2064. The segment covering 1769–1789 (GSRSSNAKLPSVPTVDSVSQD) has biased composition (polar residues). The 109-residue stretch at 2073–2181 (NLAGPVSLST…TVKKVVNYLP (109 aa)) folds into the BEACH-type PH domain. The 290-residue stretch at 2200 to 2489 (ASPRQLFKAS…QLLIEPHPPR (290 aa)) folds into the BEACH domain. Ser-2496 carries the post-translational modification Phosphoserine. WD repeat units follow at residues 2591–2633 (DQSI…LIQV), 2636–2679 (GHWD…SGIG), 2695–2735 (GHDY…RTLE), 2777–2816 (ETDDNIRAIQLSRDGQYLLTGGDRGVVVVRQVSDLKQLFA), and 2819–2858 (GCDAGIRAMALSYDQRCIISGMASGSIVLFYNDFNRWHHE).

As to quaternary structure, interacts with TOM1 and TOLLIP. Ubiquitous.

Its subcellular location is the cell membrane. It is found in the endoplasmic reticulum membrane. It localises to the golgi apparatus. The protein resides in the trans-Golgi network membrane. The protein localises to the lysosome membrane. Involved in coupling signal transduction and vesicle trafficking to enable polarized secretion and/or membrane deposition of immune effector molecules. Involved in phagophore growth during mitophagy by regulating ATG9A trafficking to mitochondria. In Homo sapiens (Human), this protein is Lipopolysaccharide-responsive and beige-like anchor protein.